We begin with the raw amino-acid sequence, 143 residues long: Cell division protein SepF (143 aa).

This sequence belongs to the SepF family. In terms of assembly, homodimer. Interacts with FtsZ.

It is found in the cytoplasm. In terms of biological role, cell division protein that is part of the divisome complex and is recruited early to the Z-ring. Probably stimulates Z-ring formation, perhaps through the cross-linking of FtsZ protofilaments. Its function overlaps with FtsA. This chain is Cell division protein SepF, found in Geobacillus thermodenitrificans (strain NG80-2).